The primary structure comprises 340 residues: Serine racemase (340 aa).

Mg(2+) is bound at residue E13. S31, S32, I33, K51, and T52 together coordinate ATP. The active-site Proton acceptor is the K56. K56 carries the post-translational modification N6-(pyridoxal phosphate)lysine. Positions 69 and 81 each coordinate Ca(2+). S84 (proton acceptor) is an active-site residue. N86 is a binding site for pyridoxal 5'-phosphate. Residue Q89 participates in ATP binding. C113 is subject to S-nitrosocysteine. Y121 is a binding site for ATP. N154 serves as a coordination point for pyridoxal 5'-phosphate. Residue D178 coordinates Mg(2+). Pyridoxal 5'-phosphate is bound by residues G185, G186, G187, G188, and M189. Positions 210, 214, 216, and 247 each coordinate Mg(2+). E210, A214, D216, and N247 together coordinate Ca(2+). Residues E210, A214, and D216 each coordinate Mn(2+). K279 lines the ATP pocket. S313 is a pyridoxal 5'-phosphate binding site. Position 316 (N316) interacts with ATP.

This sequence belongs to the serine/threonine dehydratase family. In terms of assembly, homodimer. It depends on Mg(2+) as a cofactor. The cofactor is Mn(2+). Requires Ca(2+) as cofactor. Pyridoxal 5'-phosphate is required as a cofactor. In terms of processing, S-nitrosylated, leading to decrease the enzyme activity. Expressed in the cerebellum, hippocampus, dorsolateral prefrontal cortex, and in motor neurons and glial cells of the lumbar spinal cord (at protein level). Increased in the dorsolateral prefrontal cortex of schizophrenic patients (at protein level). Brain: expressed at high levels in hippocampus and corpus callosum, intermediate levels in substantia nigra and caudate, and low levels in amygdala, thalamus, and subthalamic nuclei. Expressed in heart, skeletal muscle, kidney, and liver.

It catalyses the reaction L-serine = D-serine. The enzyme catalyses D-serine = pyruvate + NH4(+). It carries out the reaction L-serine = pyruvate + NH4(+). Its activity is regulated as follows. Allosterically activated by magnesium, and possibly also other divalent metal cations. Allosterically activated by ATP, ADP or GTP. Competitively inhibited by malonate. Inhibited by meso-tartrate and malonate. Catalyzes the synthesis of D-serine from L-serine. D-serine is a key coagonist with glutamate at NMDA receptors. Has dehydratase activity towards both L-serine and D-serine. This Homo sapiens (Human) protein is Serine racemase (SRR).